The primary structure comprises 331 residues: Ornithine carbamoyltransferase (331 aa).

Residues 57–60, glutamine 82, arginine 106, and 133–136 contribute to the carbamoyl phosphate site; these read STRT and HPTQ. L-ornithine-binding positions include asparagine 166, aspartate 230, and 234–235; that span reads SM. Carbamoyl phosphate contacts are provided by residues 272-273 and arginine 317; that span reads CL.

Belongs to the aspartate/ornithine carbamoyltransferase superfamily. OTCase family.

It localises to the cytoplasm. The enzyme catalyses carbamoyl phosphate + L-ornithine = L-citrulline + phosphate + H(+). Its pathway is amino-acid degradation; L-arginine degradation via ADI pathway; carbamoyl phosphate from L-arginine: step 2/2. Its function is as follows. Reversibly catalyzes the transfer of the carbamoyl group from carbamoyl phosphate (CP) to the N(epsilon) atom of ornithine (ORN) to produce L-citrulline. The chain is Ornithine carbamoyltransferase from Clostridium perfringens (strain SM101 / Type A).